A 466-amino-acid chain; its full sequence is 3-isopropylmalate dehydratase large subunit (466 aa).

Residues C347, C407, and C410 each coordinate [4Fe-4S] cluster.

Belongs to the aconitase/IPM isomerase family. LeuC type 1 subfamily. In terms of assembly, heterodimer of LeuC and LeuD. Requires [4Fe-4S] cluster as cofactor.

It carries out the reaction (2R,3S)-3-isopropylmalate = (2S)-2-isopropylmalate. Its pathway is amino-acid biosynthesis; L-leucine biosynthesis; L-leucine from 3-methyl-2-oxobutanoate: step 2/4. Catalyzes the isomerization between 2-isopropylmalate and 3-isopropylmalate, via the formation of 2-isopropylmaleate. This Pseudoalteromonas translucida (strain TAC 125) protein is 3-isopropylmalate dehydratase large subunit.